A 572-amino-acid polypeptide reads, in one-letter code: Proline--tRNA ligase (572 aa).

This sequence belongs to the class-II aminoacyl-tRNA synthetase family. ProS type 1 subfamily. In terms of assembly, homodimer.

The protein resides in the cytoplasm. The catalysed reaction is tRNA(Pro) + L-proline + ATP = L-prolyl-tRNA(Pro) + AMP + diphosphate. Its function is as follows. Catalyzes the attachment of proline to tRNA(Pro) in a two-step reaction: proline is first activated by ATP to form Pro-AMP and then transferred to the acceptor end of tRNA(Pro). As ProRS can inadvertently accommodate and process non-cognate amino acids such as alanine and cysteine, to avoid such errors it has two additional distinct editing activities against alanine. One activity is designated as 'pretransfer' editing and involves the tRNA(Pro)-independent hydrolysis of activated Ala-AMP. The other activity is designated 'posttransfer' editing and involves deacylation of mischarged Ala-tRNA(Pro). The misacylated Cys-tRNA(Pro) is not edited by ProRS. The chain is Proline--tRNA ligase from Pectobacterium carotovorum subsp. carotovorum (strain PC1).